Reading from the N-terminus, the 273-residue chain is Shikimate dehydrogenase (NADP(+)) (273 aa).

Shikimate contacts are provided by residues 14–16 (SKS) and Thr-61. The active-site Proton acceptor is the Lys-65. Shikimate-binding residues include Asn-86 and Asp-102. Residues 126 to 130 (GAGGA), 150 to 155 (NRTHAR), and Met-213 contribute to the NADP(+) site. Tyr-215 serves as a coordination point for shikimate. Gly-237 lines the NADP(+) pocket.

This sequence belongs to the shikimate dehydrogenase family. As to quaternary structure, homodimer.

The enzyme catalyses shikimate + NADP(+) = 3-dehydroshikimate + NADPH + H(+). Its pathway is metabolic intermediate biosynthesis; chorismate biosynthesis; chorismate from D-erythrose 4-phosphate and phosphoenolpyruvate: step 4/7. Involved in the biosynthesis of the chorismate, which leads to the biosynthesis of aromatic amino acids. Catalyzes the reversible NADPH linked reduction of 3-dehydroshikimate (DHSA) to yield shikimate (SA). This Aeromonas hydrophila subsp. hydrophila (strain ATCC 7966 / DSM 30187 / BCRC 13018 / CCUG 14551 / JCM 1027 / KCTC 2358 / NCIMB 9240 / NCTC 8049) protein is Shikimate dehydrogenase (NADP(+)).